Consider the following 240-residue polypeptide: Ribosomal RNA large subunit methyltransferase E (240 aa).

The tract at residues 1-28 (MSSSPRSPDARPLKVRVKSARTRSSSSQ) is disordered. 5 residues coordinate S-adenosyl-L-methionine: G80, W82, D103, D119, and D143. The active-site Proton acceptor is K183.

It belongs to the class I-like SAM-binding methyltransferase superfamily. RNA methyltransferase RlmE family.

Its subcellular location is the cytoplasm. It catalyses the reaction uridine(2552) in 23S rRNA + S-adenosyl-L-methionine = 2'-O-methyluridine(2552) in 23S rRNA + S-adenosyl-L-homocysteine + H(+). Functionally, specifically methylates the uridine in position 2552 of 23S rRNA at the 2'-O position of the ribose in the fully assembled 50S ribosomal subunit. This Azorhizobium caulinodans (strain ATCC 43989 / DSM 5975 / JCM 20966 / LMG 6465 / NBRC 14845 / NCIMB 13405 / ORS 571) protein is Ribosomal RNA large subunit methyltransferase E.